Here is a 316-residue protein sequence, read N- to C-terminus: Lipoyl synthase (316 aa).

[4Fe-4S] cluster-binding residues include Cys-60, Cys-65, Cys-71, Cys-86, Cys-90, Cys-93, and Ser-297. The Radical SAM core domain maps to 72-286 (WEDREATFLI…KDEADEVGFT (215 aa)).

The protein belongs to the radical SAM superfamily. Lipoyl synthase family. The cofactor is [4Fe-4S] cluster.

The protein resides in the cytoplasm. The enzyme catalyses [[Fe-S] cluster scaffold protein carrying a second [4Fe-4S](2+) cluster] + N(6)-octanoyl-L-lysyl-[protein] + 2 oxidized [2Fe-2S]-[ferredoxin] + 2 S-adenosyl-L-methionine + 4 H(+) = [[Fe-S] cluster scaffold protein] + N(6)-[(R)-dihydrolipoyl]-L-lysyl-[protein] + 4 Fe(3+) + 2 hydrogen sulfide + 2 5'-deoxyadenosine + 2 L-methionine + 2 reduced [2Fe-2S]-[ferredoxin]. It functions in the pathway protein modification; protein lipoylation via endogenous pathway; protein N(6)-(lipoyl)lysine from octanoyl-[acyl-carrier-protein]: step 2/2. Catalyzes the radical-mediated insertion of two sulfur atoms into the C-6 and C-8 positions of the octanoyl moiety bound to the lipoyl domains of lipoate-dependent enzymes, thereby converting the octanoylated domains into lipoylated derivatives. This Nocardioides sp. (strain ATCC BAA-499 / JS614) protein is Lipoyl synthase.